The primary structure comprises 1333 residues: Vascular endothelial growth factor receptor 1 (1333 aa).

Residues 1–22 form the signal peptide; it reads MVSCWDTAVLPYALLGCLLLTG. Residues 23–759 are Extracellular-facing; the sequence is YGSGSKLKVP…QGTSDKSNLE (737 aa). 7 Ig-like C2-type domains span residues 32–124, 152–215, 231–328, 334–429, 430–550, 557–656, and 662–748; these read PELS…AESS, GRQL…VNGH, LDVQ…TSVH, FISV…NVKP, QIYE…RNIK, PNGF…EVLV, and PHLL…AYLT. Cystine bridges form between Cys-53–Cys-108 and Cys-159–Cys-208. Residues Asn-101, Asn-165, Asn-197, and Asn-252 are each glycosylated (N-linked (GlcNAc...) asparagine). Cysteines 253 and 312 form a disulfide. N-linked (GlcNAc...) asparagine glycans are attached at residues Asn-324, Asn-418, Asn-475, Asn-517, Asn-598, Asn-626, Asn-667, and Asn-714. 2 disulfide bridges follow: Cys-455-Cys-536 and Cys-578-Cys-637. Cys-683 and Cys-732 are joined by a disulfide. A helical transmembrane segment spans residues 760–781; the sequence is LITLTCTCVAATLFWLLLTLFI. Residues 782 to 1333 lie on the Cytoplasmic side of the membrane; sequence RKLKRSSSEV…SVVLYSSPPA (552 aa). Residues 828 to 1158 form the Protein kinase domain; sequence LKLGKSLGRG…ELVEKLGDLL (331 aa). ATP is bound by residues 834–842 and Lys-862; that span reads LGRGAFGKV. Position 915 is a phosphotyrosine; by autocatalysis (Tyr-915). Positions 947 to 983 are disordered; sequence EPGLEQGQKPRLDSVSSSSVTSSSFPEDRSVSDVEGD. Residues 960 to 970 show a composition bias toward low complexity; sequence SVSSSSVTSSS. The Proton acceptor role is filled by Asp-1022. A phosphotyrosine; by autocatalysis mark is found at Tyr-1053, Tyr-1169, Tyr-1213, Tyr-1242, Tyr-1322, and Tyr-1328.

Belongs to the protein kinase superfamily. Tyr protein kinase family. CSF-1/PDGF receptor subfamily. As to quaternary structure, interacts with VEGFA, VEGFB and PGF. Monomer in the absence of bound VEGFA, VEGFB or PGF. Homodimer in the presence of bound VEGFA, VEGFB and PGF. Can also form a heterodimer with KDR. Interacts (tyrosine phosphorylated) with CBL, CRK, GRB2, NCK1, PIK3R1, PLCG, PSEN1 and PTPN11. Probably interacts with PTPRB. Interacts with RACK1. Identified in a complex with CBL and CD2AP. In terms of processing, N-glycosylated. Post-translationally, ubiquitinated after VEGFA-mediated autophosphorylation, leading to proteolytic degradation. Autophosphorylated on tyrosine residues upon ligand binding. Autophosphorylation occurs in trans, i.e. one subunit of the dimeric receptor phosphorylates tyrosine residues on the other subunit. Phosphorylation at Tyr-1169 is important for interaction with PLCG. Phosphorylation at Tyr-1213 is important for interaction with PIK3R1, PTPN11, GRB2, and PLCG. Phosphorylation at Tyr-1328 is important for endocytosis and for interaction with CBL, NCK1 and CRK. Is probably dephosphorylated by PTPRB.

The protein localises to the cell membrane. The protein resides in the endosome. It carries out the reaction L-tyrosyl-[protein] + ATP = O-phospho-L-tyrosyl-[protein] + ADP + H(+). Its activity is regulated as follows. Present in an inactive conformation in the absence of bound ligand. Binding of VEGFA, VEGFB or PGF leads to dimerization and activation by autophosphorylation on tyrosine residues. Tyrosine-protein kinase that acts as a cell-surface receptor for VEGFA, VEGFB and PGF, and plays an essential role in the development of embryonic vasculature, the regulation of angiogenesis, cell survival, cell migration, macrophage function, chemotaxis, and cancer cell invasion. Acts as a positive regulator of postnatal retinal hyaloid vessel regression. May play an essential role as a negative regulator of embryonic angiogenesis by inhibiting excessive proliferation of endothelial cells. Can promote endothelial cell proliferation, survival and angiogenesis in adulthood. Its function in promoting cell proliferation seems to be cell-type specific. Promotes PGF-mediated proliferation of endothelial cells, and proliferation of some types of cancer cells, but does not promote proliferation of normal fibroblasts. Has very high affinity for VEGFA and relatively low protein kinase activity; may function as a negative regulator of VEGFA signaling by limiting the amount of free VEGFA and preventing its binding to KDR. Modulates KDR signaling by forming heterodimers with KDR. Ligand binding leads to the activation of several signaling cascades. Activation of PLCG leads to the production of the cellular signaling molecules diacylglycerol and inositol 1,4,5-trisphosphate and the activation of protein kinase C. Mediates phosphorylation of PIK3R1, the regulatory subunit of phosphatidylinositol 3-kinase, leading to the activation of phosphatidylinositol kinase and the downstream signaling pathway. Mediates activation of MAPK1/ERK2, MAPK3/ERK1 and the MAP kinase signaling pathway, as well as of the AKT1 signaling pathway. Phosphorylates SRC, YES1 and PLCG, and may also phosphorylate CBL. Promotes phosphorylation of AKT1 and PTK2/FAK1. This Mus musculus (Mouse) protein is Vascular endothelial growth factor receptor 1 (Flt1).